The sequence spans 408 residues: Zinc finger protein 764 (408 aa).

The KRAB domain occupies valine 26–cysteine 97. Residues aspartate 91 to proline 167 are disordered. 7 C2H2-type zinc fingers span residues histidine 175–histidine 197, phenylalanine 203–histidine 225, histidine 231–histidine 253, tyrosine 259–histidine 281, phenylalanine 287–histidine 309, tyrosine 315–histidine 337, and tyrosine 343–histidine 365.

Belongs to the krueppel C2H2-type zinc-finger protein family. Interacts (via KRAB domain) with NR3C1/GR (via NR LBD domain); the interaction regulates transcription factor activity of NR3C1 by directing its actions toward certain biologic pathways.

It localises to the nucleus. Functionally, zinc finger protein that functions as a cofactor for steroid hormone receptors, such as NR3C1/GR. Directs NR3C1/GR transcriptional activity toward specific biologic pathways by changing NR3C1/GR binding and transcriptional activity on the glucocorticoid-responsive genes. The polypeptide is Zinc finger protein 764 (Homo sapiens (Human)).